We begin with the raw amino-acid sequence, 612 residues long: DNA mismatch repair protein MutL (612 aa).

Belongs to the DNA mismatch repair MutL/HexB family.

This protein is involved in the repair of mismatches in DNA. It is required for dam-dependent methyl-directed DNA mismatch repair. May act as a 'molecular matchmaker', a protein that promotes the formation of a stable complex between two or more DNA-binding proteins in an ATP-dependent manner without itself being part of a final effector complex. This chain is DNA mismatch repair protein MutL, found in Bartonella quintana (strain Toulouse) (Rochalimaea quintana).